The primary structure comprises 778 residues: MNKKILETLEFDKVKALFEPHLLTEQGLEQLRQLAPTAKADKIKQAFAEMKEMQALFVEQPHFTILSTKEIAGVCKRLEMRADLNIEEFLLLKRVLLASRELQNFYANLENVSLEELALWFEKLHDFPQLQGNLQAFNDAGFIENFASEELARIRRKIHDSESQVRDVLQDLLKQKAQMLTEGIVASRNGRQVLPVKNTYRNKIAGVVHDISASGNTVYIEPREVVKLSEEIASLRADERYEMLRILQEISERVRPHAAEIANDAWIIGHLDLIRAKVRFIQERQAVVPQLSENQEIQLLHVCHPLVKNAVANDVYFGQDLTAIVITGPNTGGKTIMLKTLGLTQVMAQSGLPILADKGSRVGIFEEIFADIGDEQSIEQSLSTFSSHMTNIVDILGKVNQHSLLLLDELGAGTDPQEGAALAMAILEDLRLRQIKTMATTHYPELKAYGIETAFVQNASMEFDTATLRPTYRFMQGVPGRSNAFEIAKRLGLSEVIVGDASQQIDQDNDVNRIIEQLEEQTLESRKRLDNIREVEQENLKMNRALKKLYNELNREKETELNKAREQAAEIVDMALSESDQILKNLHSKSQLKPHEIIEAKAKLKKLAPEKVDLSKNKVLQKAKKKRAPKVGDDIVVLSYGQRGTLTSQLKDGRWEAQVGLIKMTLEEKEFDLVQAQQEKPVKKKQVNVVKRTSGRGPQARLDLRGKRYEEAMNELDTFIDQALLNNMAQVDIIHGIGTGVIREGVTKYLQRNKHVKSFGYAPQNAGGSGATIVTFKG.

ATP is bound at residue G328 to T335. The Smr domain occupies L702–K777.

Belongs to the DNA mismatch repair MutS family. MutS2 subfamily. As to quaternary structure, homodimer. Binds to stalled ribosomes, contacting rRNA.

Functionally, endonuclease that is involved in the suppression of homologous recombination and thus may have a key role in the control of bacterial genetic diversity. Acts as a ribosome collision sensor, splitting the ribosome into its 2 subunits. Detects stalled/collided 70S ribosomes which it binds and splits by an ATP-hydrolysis driven conformational change. Acts upstream of the ribosome quality control system (RQC), a ribosome-associated complex that mediates the extraction of incompletely synthesized nascent chains from stalled ribosomes and their subsequent degradation. Probably generates substrates for RQC. This chain is Endonuclease MutS2, found in Streptococcus pneumoniae (strain ATCC 700669 / Spain 23F-1).